The following is a 292-amino-acid chain: tRNA pseudouridine synthase B (292 aa).

Catalysis depends on Asp-38, which acts as the Nucleophile.

Belongs to the pseudouridine synthase TruB family. Type 1 subfamily.

It catalyses the reaction uridine(55) in tRNA = pseudouridine(55) in tRNA. In terms of biological role, responsible for synthesis of pseudouridine from uracil-55 in the psi GC loop of transfer RNAs. This Streptococcus pneumoniae serotype 2 (strain D39 / NCTC 7466) protein is tRNA pseudouridine synthase B.